The chain runs to 301 residues: Phosphatidylglycerol--prolipoprotein diacylglyceryl transferase (301 aa).

A run of 4 helical transmembrane segments spans residues isoleucine 10–phenylalanine 30, leucine 57–tyrosine 77, valine 92–tryptophan 112, and methionine 119–glycine 139. Residue arginine 140 participates in a 1,2-diacyl-sn-glycero-3-phospho-(1'-sn-glycerol) binding. A run of 3 helical transmembrane segments spans residues proline 202–phenylalanine 222, tyrosine 230–valine 250, and leucine 264–leucine 284.

Belongs to the Lgt family.

It localises to the cell inner membrane. It catalyses the reaction L-cysteinyl-[prolipoprotein] + a 1,2-diacyl-sn-glycero-3-phospho-(1'-sn-glycerol) = an S-1,2-diacyl-sn-glyceryl-L-cysteinyl-[prolipoprotein] + sn-glycerol 1-phosphate + H(+). Its pathway is protein modification; lipoprotein biosynthesis (diacylglyceryl transfer). Catalyzes the transfer of the diacylglyceryl group from phosphatidylglycerol to the sulfhydryl group of the N-terminal cysteine of a prolipoprotein, the first step in the formation of mature lipoproteins. The polypeptide is Phosphatidylglycerol--prolipoprotein diacylglyceryl transferase (Xylella fastidiosa (strain M23)).